A 521-amino-acid chain; its full sequence is Acetyl-CoA hydrolase (521 aa).

Residue 276–280 (GIGNI) coordinates CoA. Residue E301 is the 5-glutamyl coenzyme A thioester intermediate of the active site. 2 residues coordinate CoA: N391 and G395.

This sequence belongs to the acetyl-CoA hydrolase/transferase family.

It localises to the cytoplasm. It carries out the reaction acetyl-CoA + H2O = acetate + CoA + H(+). Presumably involved in regulating the intracellular acetyl-CoA pool for fatty acid and cholesterol synthesis and fatty acid oxidation. This Schizosaccharomyces pombe (strain 972 / ATCC 24843) (Fission yeast) protein is Acetyl-CoA hydrolase (ach1).